A 248-amino-acid polypeptide reads, in one-letter code: tRNA (guanine-N(1)-)-methyltransferase (248 aa).

S-adenosyl-L-methionine contacts are provided by residues glycine 113 and 133 to 138; that span reads IGDYVL.

The protein belongs to the RNA methyltransferase TrmD family. In terms of assembly, homodimer.

The protein resides in the cytoplasm. It catalyses the reaction guanosine(37) in tRNA + S-adenosyl-L-methionine = N(1)-methylguanosine(37) in tRNA + S-adenosyl-L-homocysteine + H(+). Specifically methylates guanosine-37 in various tRNAs. The chain is tRNA (guanine-N(1)-)-methyltransferase from Shewanella loihica (strain ATCC BAA-1088 / PV-4).